We begin with the raw amino-acid sequence, 387 residues long: Capsid protein (387 aa).

Residues 1-33 (MARTKSKPRKRTTVRKARRSVKRRTTTKGTKRK) are compositionally biased toward basic residues. Disordered stretches follow at residues 1–47 (MART…RGVA) and 365–387 (KSAK…REFN). 2 consecutive short sequence motifs (nuclear localization signal) follow at residues 8-15 (PRKRTTVR) and 30-37 (TKRKTAGD). Over residues 370-379 (NDQLNNNQDA) the composition is skewed to low complexity.

The protein resides in the host nucleus. It localises to the virion. Its function is as follows. Self-assembles to form the virion icosahedral capsid. In Chaetoceros protobacilladnavirus 2 (Chaetoceros sp. DNA virus 7), this protein is Capsid protein.